The sequence spans 951 residues: Leucine-rich repeat-containing G-protein coupled receptor 4 (951 aa).

An N-terminal signal peptide occupies residues 1–24 (MPGPLRLLCFFALGLLGSAGPSGA). The 33-residue stretch at 25–57 (APPLCAAPCSCDGDRRVDCSGKGLTAVPEGLSA) folds into the LRRNT domain. Residues 25-544 (APPLCAAPCS…LLGSWMIRLT (520 aa)) lie on the Extracellular side of the membrane. 2 disulfide bridges follow: Cys29-Cys35 and Cys33-Cys43. LRR repeat units follow at residues 58-79 (FTQALDISMNNITQLPEDAFKN), 82-103 (FLEELQLAGNDLSFIHPKALSG), 106-127 (ELKVLTLQNNQLKTVPSEAIRG), 130-151 (ALQSLRLDANHITSVPEDSFEG), 154-177 (QLRHLWLDDNILTEVPVRPLSNLP), 178-199 (TLQALTLALNNISSIPDFAFTN), 202-223 (SLVVLHLHNNKIKSLSQHCFDG), 226-247 (NLETLDLNYNNLDEFPQAIKAL), 249-270 (SLKELGFHSNSISVIPDGAFAG), 273-294 (LLRTIHLYDNPLSFVGNSAFHN), 320-341 (HLESLTLTGTKISSIPDDLCQN), 344-365 (MLRTLDLSYNDIRDLPSFNGCR), 366-387 (ALEEISLQRNQISLIKETTFQG), 390-411 (SLRILDLSRNLIREIHSGAFAK), and 414-435 (TITNLDVSFNELTSFPTEGLNG). The N-linked (GlcNAc...) asparagine glycan is linked to Asn68. 2 N-linked (GlcNAc...) asparagine glycosylation sites follow: Asn188 and Asn199. N-linked (GlcNAc...) asparagine glycosylation is present at Asn294. The cysteines at positions 339 and 364 are disulfide-linked. 2 disulfides stabilise this stretch: Cys470–Cys522 and Cys471–Cys476. Residues 487-512 (NSPQDHSVTKEKGATDAANATSTAES) are disordered. The span at 501–510 (TDAANATSTA) shows a compositional bias: low complexity. An N-linked (GlcNAc...) asparagine glycan is attached at Asn505. The helical transmembrane segment at 545 to 565 (VWFIFLVALLFNLLVILTVFA) threads the bilayer. Residues 566 to 575 (SCSSLPASKL) are Cytoplasmic-facing. A helical membrane pass occupies residues 576-596 (FIGLISVSNLLMGIYTGILTF). Residues 597-619 (LDAVSWGRFAEFGIWWETGSGCK) are Extracellular-facing. Cys618 and Cys693 are oxidised to a cystine. Residues 620 to 640 (VAGSLAVFSSESAVFLLTLAA) form a helical membrane-spanning segment. The Cytoplasmic portion of the chain corresponds to 641 to 661 (VERSVFAKDVMKNGKSSHLRQ). Residues 662–682 (FQVAALVALLGAAIAGCFPLF) traverse the membrane as a helical segment. Residues 683–703 (HGGQYSASPLCLPFPTGETPS) lie on the Extracellular side of the membrane. Residues 704–724 (LGFTVTLVLLNSLAFLLMAII) form a helical membrane-spanning segment. Residues 725–756 (YTKLYCNLEKEDPSENSQSSMIKHVAWLIFTN) lie on the Cytoplasmic side of the membrane. Residues 757–777 (CIFFCPVAFFSFAPLITAISI) traverse the membrane as a helical segment. Over 778–783 (SPEIMK) the chain is Extracellular. A helical transmembrane segment spans residues 784–804 (SVTLIFFPLPACLNPVLYVFF). Over 805–951 (NPKFKDDWKL…YAYNLPRVRD (147 aa)) the chain is Cytoplasmic. Ser920 carries the post-translational modification Phosphoserine.

Belongs to the G-protein coupled receptor 1 family.

The protein localises to the cell membrane. In terms of biological role, receptor for R-spondins that potentiates the canonical Wnt signaling pathway and is involved in the formation of various organs. Upon binding to R-spondins (RSPO1, RSPO2, RSPO3 or RSPO4), associates with phosphorylated LRP6 and frizzled receptors that are activated by extracellular Wnt receptors, triggering the canonical Wnt signaling pathway to increase expression of target genes. In contrast to classical G-protein coupled receptors, does not activate heterotrimeric G-proteins to transduce the signal. Its function as activator of the Wnt signaling pathway is required for the development of various organs, including liver, kidney, intestine, bone, reproductive tract and eye. May also act as a receptor for norrin (NDP), such results however require additional confirmation in vivo. Required during spermatogenesis to activate the Wnt signaling pathway in peritubular myoid cells. Required for the maintenance of intestinal stem cells and Paneth cell differentiation in postnatal intestinal crypts. Acts as a regulator of bone formation and remodeling. Involved in kidney development; required for maintaining the ureteric bud in an undifferentiated state. Involved in the development of the anterior segment of the eye. Required during erythropoiesis. Also acts as a negative regulator of innate immunity by inhibiting TLR2/TLR4 associated pattern-recognition and pro-inflammatory cytokine production. Plays an important role in regulating the circadian rhythms of plasma lipids, partially through regulating the rhythmic expression of MTTP. Required for proper development of GnRH neurons (gonadotropin-releasing hormone expressing neurons) that control the release of reproductive hormones from the pituitary gland. In Mus musculus (Mouse), this protein is Leucine-rich repeat-containing G-protein coupled receptor 4 (Lgr4).